Reading from the N-terminus, the 250-residue chain is Small ribosomal subunit protein uS2 (250 aa).

The protein belongs to the universal ribosomal protein uS2 family.

The chain is Small ribosomal subunit protein uS2 from Acidovorax sp. (strain JS42).